Reading from the N-terminus, the 86-residue chain is Neuropeptide-like 2 (86 aa).

The signal sequence occupies residues 1-19 (MAKLAICILVFALFALALS). Propeptides lie at residues 20-34 (ARVP…QEFL) and 45-86 (IEKL…AAST).

As to expression, hemolymph (at protein level).

The protein resides in the secreted. The protein is Neuropeptide-like 2 (Nplp2) of Drosophila melanogaster (Fruit fly).